A 303-amino-acid polypeptide reads, in one-letter code: Sulfate adenylyltransferase subunit 2 (303 aa).

It belongs to the PAPS reductase family. CysD subfamily. As to quaternary structure, heterodimer composed of CysD, the smaller subunit, and CysN.

It catalyses the reaction sulfate + ATP + H(+) = adenosine 5'-phosphosulfate + diphosphate. The protein operates within sulfur metabolism; hydrogen sulfide biosynthesis; sulfite from sulfate: step 1/3. Functionally, with CysN forms the ATP sulfurylase (ATPS) that catalyzes the adenylation of sulfate producing adenosine 5'-phosphosulfate (APS) and diphosphate, the first enzymatic step in sulfur assimilation pathway. APS synthesis involves the formation of a high-energy phosphoric-sulfuric acid anhydride bond driven by GTP hydrolysis by CysN coupled to ATP hydrolysis by CysD. This chain is Sulfate adenylyltransferase subunit 2, found in Sulfurimonas denitrificans (strain ATCC 33889 / DSM 1251) (Thiomicrospira denitrificans (strain ATCC 33889 / DSM 1251)).